A 122-amino-acid polypeptide reads, in one-letter code: Proteasome assembly chaperone 3 (122 aa).

Methionine 1 bears the N-acetylmethionine mark.

The protein belongs to the PSMG3 family. In terms of assembly, homodimer. Interacts with PSMG4. Interacts directly with alpha and beta subunits of the 20S proteasome but dissociates before the formation of half-proteasomes, probably upon recruitment of POMP.

Chaperone protein which promotes assembly of the 20S proteasome. May cooperate with PSMG1-PSMG2 heterodimers to orchestrate the correct assembly of proteasomes. This Homo sapiens (Human) protein is Proteasome assembly chaperone 3.